A 461-amino-acid polypeptide reads, in one-letter code: Thyroid hormone receptor beta (461 aa).

Residues 1–24 (MTPNSMTENRLPAWDKQKPHPDRG) are disordered. Residues 1–106 (MTPNSMTENR…IPSYLDKDEL (106 aa)) are modulating. Residues 13–24 (AWDKQKPHPDRG) show a composition bias toward basic and acidic residues. The Zn(2+) site is built by cysteine 107, cysteine 110, cysteine 124, cysteine 127, cysteine 145, cysteine 151, cysteine 161, and cysteine 164. 2 consecutive NR C4-type zinc fingers follow at residues 107 to 127 (CVVC…CEGC) and 145 to 169 (CKYE…FKKC). A DNA-binding region (nuclear receptor) is located at residues 107-181 (CVVCGDKATG…VGMATDLVLD (75 aa)). Positions 217–461 (EEWELIKTVT…PPLFLEVFED (245 aa)) constitute an NR LBD domain. Positions 244–461 (KFLPEDIGQA…PPLFLEVFED (218 aa)) are interaction with NR2F6. Positions 282, 331, and 435 each coordinate 3,3',5-triiodo-L-thyronine. L-thyroxine is bound by residues arginine 282, asparagine 331, and histidine 435.

It belongs to the nuclear hormone receptor family. NR1 subfamily. In terms of assembly, binds DNA as a dimer; homodimer and heterodimer with RXRA. Interacts with the coactivators NCOA1/SRC1, NCOA2/GRIP1, NCOA7 and MED1/TRAP220 in a ligand-inducible manner. Interacts with the corepressor NCOR1 in absence of ligand. Interacts with C1D. Interacts with NR2F6; the interaction impairs the binding of the THRB homodimer and THRB:RXRB heterodimer to T3 response elements. Interacts with PRMT2 and THRSP. Interacts with TACC1; this interaction is decreased in the presence of thyroid hormone T3.

It localises to the nucleus. In terms of biological role, nuclear hormone receptor that can act as a repressor or activator of transcription. High affinity receptor for thyroid hormones, including triiodothyronine and thyroxine. In Rattus norvegicus (Rat), this protein is Thyroid hormone receptor beta (Thrb).